A 434-amino-acid chain; its full sequence is tRNA dimethylallyltransferase (434 aa).

ATP is bound at residue 10–17 (GTTGAGKS). 12-17 (TGAGKS) contributes to the substrate binding site. 2 interaction with substrate tRNA regions span residues 35-38 (DSMQ) and 166-170 (RKIRR). Residues 211-233 (SLVLMPRLDKRVDKMLSHGLVDE) form an interaction with isopentenylpyrophosphate transferase region. 3 interaction with substrate tRNA regions span residues 256 to 258 (QCI), 281 to 299 (RMKVSTRQYAKSQKKWIQS), and 291 to 298 (KSQKKWIQ). A Matrin-type zinc finger spans residues 380–416 (FVCEECLDKRGDPFTVIGEDAFNVHIKSRKHKTTVRR).

Belongs to the IPP transferase family.

The protein resides in the mitochondrion. The protein localises to the cytoplasm. It localises to the nucleus. The enzyme catalyses adenosine(37) in tRNA + dimethylallyl diphosphate = N(6)-dimethylallyladenosine(37) in tRNA + diphosphate. In terms of biological role, catalyzes the transfer of a dimethylallyl group onto the adenine at position 37 of both cytosolic and mitochondrial tRNAs, leading to the formation of N6-(dimethylallyl)adenosine (i(6)A). The chain is tRNA dimethylallyltransferase (tit1) from Schizosaccharomyces pombe (strain 972 / ATCC 24843) (Fission yeast).